A 380-amino-acid polypeptide reads, in one-letter code: Deoxyguanosinetriphosphate triphosphohydrolase-like protein (380 aa).

A disordered region spans residues 1–28 (MYAPYATMPDRSRGRAVPEEESSFRSPF). In terms of domain architecture, HD spans 62 to 198 (RLTHSIEVGQ…AALADDIAYN (137 aa)).

The protein belongs to the dGTPase family. Type 2 subfamily.

The sequence is that of Deoxyguanosinetriphosphate triphosphohydrolase-like protein from Ruegeria sp. (strain TM1040) (Silicibacter sp.).